The chain runs to 277 residues: Undecaprenyl-diphosphatase 2 (277 aa).

Helical transmembrane passes span 43–63 (RAMA…VWEF), 87–107 (LLIA…TIHE), 109–129 (LFNP…MLWA), 183–203 (AATE…AVYS), 214–234 (SDLP…MIAV), and 254–274 (IAFG…WTAA).

It belongs to the UppP family.

It localises to the cell inner membrane. It catalyses the reaction di-trans,octa-cis-undecaprenyl diphosphate + H2O = di-trans,octa-cis-undecaprenyl phosphate + phosphate + H(+). Catalyzes the dephosphorylation of undecaprenyl diphosphate (UPP). Confers resistance to bacitracin. This is Undecaprenyl-diphosphatase 2 from Pseudomonas fluorescens (strain Pf0-1).